The primary structure comprises 115 residues: U3-lycotoxin-Ls1a (115 aa).

The N-terminal stretch at methionine 1 to alanine 20 is a signal peptide. Positions glutamate 21 to arginine 44 are excised as a propeptide. Cystine bridges form between cysteine 48–cysteine 63, cysteine 55–cysteine 72, cysteine 62–cysteine 87, and cysteine 74–cysteine 85.

This sequence belongs to the neurotoxin 19 (CSTX) family. 01 subfamily. As to expression, expressed by the venom gland.

The protein localises to the secreted. The chain is U3-lycotoxin-Ls1a from Lycosa singoriensis (Wolf spider).